The chain runs to 269 residues: 4-hydroxy-tetrahydrodipicolinate reductase (269 aa).

NAD(+)-binding positions include Gly8–Met13 and Glu34. An NADP(+)-binding site is contributed by Arg35. Residues Gly98–Thr100 and Ala122–Tyr125 contribute to the NAD(+) site. The active-site Proton donor/acceptor is His155. His156 contributes to the (S)-2,3,4,5-tetrahydrodipicolinate binding site. Lys159 (proton donor) is an active-site residue. Gly165–Thr166 serves as a coordination point for (S)-2,3,4,5-tetrahydrodipicolinate.

Belongs to the DapB family.

It is found in the cytoplasm. It catalyses the reaction (S)-2,3,4,5-tetrahydrodipicolinate + NAD(+) + H2O = (2S,4S)-4-hydroxy-2,3,4,5-tetrahydrodipicolinate + NADH + H(+). The catalysed reaction is (S)-2,3,4,5-tetrahydrodipicolinate + NADP(+) + H2O = (2S,4S)-4-hydroxy-2,3,4,5-tetrahydrodipicolinate + NADPH + H(+). It functions in the pathway amino-acid biosynthesis; L-lysine biosynthesis via DAP pathway; (S)-tetrahydrodipicolinate from L-aspartate: step 4/4. Its function is as follows. Catalyzes the conversion of 4-hydroxy-tetrahydrodipicolinate (HTPA) to tetrahydrodipicolinate. In Vibrio campbellii (strain ATCC BAA-1116), this protein is 4-hydroxy-tetrahydrodipicolinate reductase.